The following is a 722-amino-acid chain: Transcription factor kayak, isoforms D/sro (722 aa).

The span at 173-188 (QHQTQQQHQSQQQQQH) shows a compositional bias: low complexity. 3 disordered regions span residues 173–193 (QHQT…RQDY), 283–317 (LGQG…HTDS), and 350–407 (GSAS…KRRV). Positions 283-300 (LGQGSESEDSNASYNDTQ) are enriched in polar residues. Low complexity-rich tracts occupy residues 308-317 (TDTSSAHTDS) and 350-364 (GSAS…TSNT). The bZIP domain occupies 385 to 448 (EQKRAVRRER…NQLEYLLATH (64 aa)). The tract at residues 387-406 (KRAVRRERNKQAAARCRKRR) is basic motif. The interval 413–420 (LTEEVEQL) is leucine-zipper. Residues 477-498 (AGSSGSGASSHHNHNSNDSSNG) are compositionally biased toward low complexity. Disordered stretches follow at residues 477–519 (AGSS…PLDL) and 683–722 (DGGT…LVSL). Residues 506–516 (TLNSTGRSNSP) show a composition bias toward polar residues. Ser-515 is subject to Phosphoserine.

This sequence belongs to the bZIP family. Fos subfamily. Homodimer. Heterodimer with Jra. The kay-Jra heterodimer binds more stably to the AP-1 site than either of the two proteins alone.

It is found in the nucleus. In terms of biological role, developmentally regulated transcription factor AP-1 binds and recognizes the enhancer DNA sequence: 5'-TGA[CG]TCA-3'. May play a role in the function or determination of a particular subset of cells in the developing embryo. It is able to carry out its function either independently of or in conjunction with Jra. The polypeptide is Transcription factor kayak, isoforms D/sro (Drosophila melanogaster (Fruit fly)).